The sequence spans 189 residues: Pyridoxal 5'-phosphate synthase subunit PdxT (189 aa).

47-49 (GES) provides a ligand contact to L-glutamine. The Nucleophile role is filled by Cys79. L-glutamine-binding positions include Arg106 and 135 to 136 (IR). Catalysis depends on charge relay system residues His171 and Glu173.

This sequence belongs to the glutaminase PdxT/SNO family. In the presence of PdxS, forms a dodecamer of heterodimers. Only shows activity in the heterodimer.

The catalysed reaction is aldehydo-D-ribose 5-phosphate + D-glyceraldehyde 3-phosphate + L-glutamine = pyridoxal 5'-phosphate + L-glutamate + phosphate + 3 H2O + H(+). It catalyses the reaction L-glutamine + H2O = L-glutamate + NH4(+). The protein operates within cofactor biosynthesis; pyridoxal 5'-phosphate biosynthesis. In terms of biological role, catalyzes the hydrolysis of glutamine to glutamate and ammonia as part of the biosynthesis of pyridoxal 5'-phosphate. The resulting ammonia molecule is channeled to the active site of PdxS. This chain is Pyridoxal 5'-phosphate synthase subunit PdxT, found in Thermoanaerobacter pseudethanolicus (strain ATCC 33223 / 39E) (Clostridium thermohydrosulfuricum).